Consider the following 766-residue polypeptide: Pentatricopeptide repeat-containing protein At5g28460 (766 aa).

PPR repeat units lie at residues 151-181 (TIVA…LDSN), 184-218 (NSQV…ESVF), 221-257 (NRIT…GVSP), 258-292 (NSVW…KTPL), 293-327 (EAPP…KIRP), 328-358 (DVVT…MRGK), 369-404 (DSIH…RCVP), 405-439 (NAVT…EIKP), 440-474 (NVVT…GVKG), 475-509 (NVVT…GCSP), 510-544 (DAKI…GFSL), 545-579 (DLLA…GKKP), 580-614 (DSIT…GLDP), 615-650 (TVTT…KVNP), 651-685 (NTVI…MVRP), and 686-720 (NVET…SCEP).

It belongs to the PPR family. P subfamily.

The chain is Pentatricopeptide repeat-containing protein At5g28460 from Arabidopsis thaliana (Mouse-ear cress).